A 29-amino-acid chain; its full sequence is GLVPCGETCFTGKCYTPGCSCSYPICKKN.

The segment at residues 1-29 (GLVPCGETCFTGKCYTPGCSCSYPICKKN) is a cross-link (cyclopeptide (Gly-Asn)). 3 disulfide bridges follow: Cys-5-Cys-19, Cys-9-Cys-21, and Cys-14-Cys-26.

Post-translationally, this is a cyclic peptide.

Probably participates in a plant defense mechanism. Has hemolytic activity. The sequence is that of Cycloviolacin-O15 from Viola odorata (Sweet violet).